Consider the following 500-residue polypeptide: Intermediate filament protein ifc-1 (500 aa).

The head stretch occupies residues 1–36 (MSLYGGIPTNLVSGMSSAGAICTTQIRDAREREKRE). The 351-residue stretch at 33 to 383 (EKREIGLLND…VLLNGANVTT (351 aa)) folds into the IF rod domain. Residues 37 to 68 (IGLLNDRLADYIEKVRFLKAQNHVLSHDIEIL) are coil 1A. Residues 69 to 81 (RRGFSGGGHISSF) form a linker 1 region. A coil 1B region spans residues 82 to 219 (FESEISNCTV…TENSSRIEQE (138 aa)). Residues 220–237 (LIYIHRDTTLENRDYFRQ) are linker 12. The interval 238–383 (ELQAAMRDIR…VLLNGANVTT (146 aa)) is coil 2. Positions 384-496 (YVSNSTGAAG…RHHESSYSYS (113 aa)) are tail.

The protein belongs to the intermediate filament family.

Its subcellular location is the cytoplasm. Its function is as follows. Cytoplasmic intermediate filaments provide mechanical strength to cells. Not essential protein. In Caenorhabditis elegans, this protein is Intermediate filament protein ifc-1 (ifc-1).